Here is a 221-residue protein sequence, read N- to C-terminus: ATP-dependent dethiobiotin synthetase BioD (221 aa).

13–18 (DIGKTY) is a binding site for ATP. Thr-17 is a Mg(2+) binding site. Residue Lys-38 is part of the active site. Ser-42 lines the substrate pocket. ATP-binding positions include Asp-51, 112 to 115 (EGSG), and 176 to 177 (NR). The Mg(2+) site is built by Asp-51 and Glu-112.

This sequence belongs to the dethiobiotin synthetase family. As to quaternary structure, homodimer. Requires Mg(2+) as cofactor.

The protein localises to the cytoplasm. The catalysed reaction is (7R,8S)-7,8-diammoniononanoate + CO2 + ATP = (4R,5S)-dethiobiotin + ADP + phosphate + 3 H(+). It participates in cofactor biosynthesis; biotin biosynthesis; biotin from 7,8-diaminononanoate: step 1/2. Catalyzes a mechanistically unusual reaction, the ATP-dependent insertion of CO2 between the N7 and N8 nitrogen atoms of 7,8-diaminopelargonic acid (DAPA, also called 7,8-diammoniononanoate) to form a ureido ring. This Brachyspira hyodysenteriae (strain ATCC 49526 / WA1) protein is ATP-dependent dethiobiotin synthetase BioD.